A 417-amino-acid chain; its full sequence is UDP-N-acetylglucosamine 1-carboxyvinyltransferase (417 aa).

Position 22 to 23 (22 to 23 (KN)) interacts with phosphoenolpyruvate. Arg-93 is a binding site for UDP-N-acetyl-alpha-D-glucosamine. Residue Cys-117 is the Proton donor of the active site. Residue Cys-117 is modified to 2-(S-cysteinyl)pyruvic acid O-phosphothioketal. UDP-N-acetyl-alpha-D-glucosamine is bound by residues 122-126 (RPVDQ), Asp-305, and Ile-327.

The protein belongs to the EPSP synthase family. MurA subfamily.

It is found in the cytoplasm. The catalysed reaction is phosphoenolpyruvate + UDP-N-acetyl-alpha-D-glucosamine = UDP-N-acetyl-3-O-(1-carboxyvinyl)-alpha-D-glucosamine + phosphate. It functions in the pathway cell wall biogenesis; peptidoglycan biosynthesis. Cell wall formation. Adds enolpyruvyl to UDP-N-acetylglucosamine. This Chromobacterium violaceum (strain ATCC 12472 / DSM 30191 / JCM 1249 / CCUG 213 / NBRC 12614 / NCIMB 9131 / NCTC 9757 / MK) protein is UDP-N-acetylglucosamine 1-carboxyvinyltransferase.